Here is a 423-residue protein sequence, read N- to C-terminus: Myb-like protein G (423 aa).

The 55-residue stretch at 36–90 (TISKQRENWTDEEHQKFLEALTLFDRDWKKIESFVGSKTVIQIRSHAQKYFIKVQ) folds into the HTH myb-type domain. A DNA-binding region (H-T-H motif) is located at residues 63–86 (WKKIESFVGSKTVIQIRSHAQKYF). Disordered regions lie at residues 93-116 (NTGE…QKQK), 177-205 (QQAV…GTTL), and 284-372 (ISPR…LGNY). The span at 177-202 (QQAVTTAQSSQRNGGLPPNPSSNNGG) shows a compositional bias: low complexity. Over residues 286–295 (PRNSTGNINV) the composition is skewed to polar residues. Over residues 302-354 (NNSNNNNNNNNNNNNNNNNNNNNNNNNNNNNNNNNNNNNNNNNNNNNNNNNNN) the composition is skewed to low complexity. Positions 361 to 372 (QNHSNMVNLGNY) are enriched in polar residues.

The protein localises to the nucleus. The protein is Myb-like protein G (mybG) of Dictyostelium discoideum (Social amoeba).